Consider the following 40-residue polypeptide: Sulfur globule protein TR0 (40 aa).

To C.vinosum CV1 and CV2. The protein envelope of the sulfur globules is composed of the three different proteins TR0, TR1 and TR2.

Structural protein of the sulfur globules, which are intracellular globules that serve for sulfur storage in purple sulfur bacteria. This chain is Sulfur globule protein TR0, found in Thiocapsa roseopersicina.